We begin with the raw amino-acid sequence, 391 residues long: Oxytocin receptor (391 aa).

The Extracellular segment spans residues Met1 to Leu38. Residues Asn8, Asn15, and Asn26 are each glycosylated (N-linked (GlcNAc...) asparagine). Residues Ala39–Ala63 form a helical membrane-spanning segment. The Cytoplasmic portion of the chain corresponds to Leu64 to Leu74. A helical membrane pass occupies residues Phe75 to Leu97. Residues Leu98–Arg113 lie on the Extracellular side of the membrane. A disulfide bond links Cys112 and Cys187. A helical membrane pass occupies residues Leu114–Leu135. The Cytoplasmic portion of the chain corresponds to Asp136 to Arg154. The chain crosses the membrane as a helical span at residues Leu155–Phe175. Residues Ser176–Thr202 are Extracellular-facing. Residues Trp203–Phe225 traverse the membrane as a helical segment. Residues Lys226–Lys277 are Cytoplasmic-facing. The helical transmembrane segment at Met278–Val296 threads the bilayer. Residues Gln297–Ser311 lie on the Extracellular side of the membrane. The helical transmembrane segment at Pro312 to Phe334 threads the bilayer. The Cytoplasmic portion of the chain corresponds to Thr335 to Leu391. 2 positions are modified to phosphoserine: Ser368 and Ser370.

Belongs to the G-protein coupled receptor 1 family. Vasopressin/oxytocin receptor subfamily.

It localises to the cell membrane. Functionally, receptor for oxytocin. The activity of this receptor is mediated by G proteins which activate a phosphatidylinositol-calcium second messenger system. In Bos taurus (Bovine), this protein is Oxytocin receptor (OXTR).